The following is a 122-amino-acid chain: Acidic phospholipase A2 (122 aa).

Disulfide bonds link C26–C115, C28–C44, C43–C95, C49–C122, C50–C88, C57–C81, and C75–C86. Ca(2+) is bound by residues Y27, G29, and G31. The active site involves H47. Residue D48 coordinates Ca(2+). Residue D89 is part of the active site.

Belongs to the phospholipase A2 family. Group II subfamily. D49 sub-subfamily. As to quaternary structure, monomer. Requires Ca(2+) as cofactor. In terms of tissue distribution, expressed by the venom gland.

It localises to the secreted. The catalysed reaction is a 1,2-diacyl-sn-glycero-3-phosphocholine + H2O = a 1-acyl-sn-glycero-3-phosphocholine + a fatty acid + H(+). Its function is as follows. PLA2 catalyzes the calcium-dependent hydrolysis of the 2-acyl groups in 3-sn-phosphoglycerides. The protein is Acidic phospholipase A2 of Gloydius blomhoffii (Mamushi).